Here is a 971-residue protein sequence, read N- to C-terminus: U2 snRNP component HSH155 (971 aa).

Disordered stretches follow at residues 1 to 22 (MSHPIQFVNANNSDKSHQLGGQ) and 54 to 118 (TRTV…AVKE). A compositionally biased stretch (polar residues) spans 8–22 (VNANNSDKSHQLGGQ). Residues 54-75 (TRTVQNREDSYHKRRFDMKFEP) show a composition bias toward basic and acidic residues. Residues 78–90 (DTQTVTSSENTQD) are compositionally biased toward polar residues. HEAT repeat units lie at residues 199-237 (MIFNRLLPILLDRSLEDQERHLMIKTIDRVLYQLGDLTK), 273-310 (AGLKTILTVMRPDIENEDEYVRNVTSRAAAVVAKALGV), 350-387 (NHLTGLMSCIKDCLMDDHVPVRIVTAHTLSTLAENSYP), 513-550 (LGCSYTIDKLLTPLRDEAEPFRTMAVHAVTRTVNLLGT), 596-633 (PFLAPIVSTILNHLKHKTPLVRQHAADLCAILIPVIKN), 680-717 (PPINQILPTLTPILRNKHRKVEVNTIKFVGLIGKLAPT), 722-759 (KEWMRICFELLELLKSTNKEIRRSANATFGFIAEAIGP), 792-829 (CGPYNVLPVIMNEYTTPETNVQNGVLKAMSFMFEYIGN), and 832-870 (KDYIYFITPLLEDALTDRDLVHRQTASNVITHLALNCSG).

The protein belongs to the SF3B1 family. Belongs to the CWC complex (or CEF1-associated complex), a spliceosome sub-complex reminiscent of a late-stage spliceosome composed of the U2, U5 and U6 snRNAs and at least BUD13, BUD31, BRR2, CDC40, CEF1, CLF1, CUS1, CWC2, CWC15, CWC21, CWC22, CWC23, CWC24, CWC25, CWC27, ECM2, HSH155, IST3, ISY1, LEA1, MSL1, NTC20, PRP8, PRP9, PRP11, PRP19, PRP21, PRP22, PRP45, PRP46, SLU7, SMB1, SMD1, SMD2, SMD3, SMX2, SMX3, SNT309, SNU114, SPP2, SYF1, SYF2, RSE1 and YJU2. Interacts with RDS3.

The protein resides in the nucleus. Functionally, contacts pre-mRNA on both sides of the branch site early in spliceosome assembly. This chain is U2 snRNP component HSH155 (HSH155), found in Saccharomyces cerevisiae (strain ATCC 204508 / S288c) (Baker's yeast).